The sequence spans 31 residues: Photosystem II reaction center protein T (31 aa).

The chain crosses the membrane as a helical span at residues 3-23 (ALVYTFLLVGTLGIIFFAIFF).

Belongs to the PsbT family. PSII is composed of 1 copy each of membrane proteins PsbA, PsbB, PsbC, PsbD, PsbE, PsbF, PsbH, PsbI, PsbJ, PsbK, PsbL, PsbM, PsbT, PsbY, PsbZ, Psb30/Ycf12, at least 3 peripheral proteins of the oxygen-evolving complex and a large number of cofactors. It forms dimeric complexes.

The protein resides in the plastid. Its subcellular location is the chloroplast thylakoid membrane. In terms of biological role, found at the monomer-monomer interface of the photosystem II (PS II) dimer, plays a role in assembly and dimerization of PSII. PSII is a light-driven water plastoquinone oxidoreductase, using light energy to abstract electrons from H(2)O, generating a proton gradient subsequently used for ATP formation. This Chlorella vulgaris (Green alga) protein is Photosystem II reaction center protein T.